We begin with the raw amino-acid sequence, 447 residues long: Argininosuccinate synthase (447 aa).

Residues Ala17–Ser25 and Ala43 contribute to the ATP site. Tyr99 lines the L-citrulline pocket. 2 residues coordinate ATP: Gly129 and Thr131. Residues Thr131, Asn135, and Asp136 each contribute to the L-aspartate site. Asn135 is an L-citrulline binding site. Asp136 contributes to the ATP binding site. Residues Arg139 and Ser192 each contribute to the L-citrulline site. Position 194 (Asp194) interacts with ATP. L-citrulline-binding residues include Thr201, Glu203, and Glu280.

It belongs to the argininosuccinate synthase family. Type 2 subfamily. Homotetramer.

The protein localises to the cytoplasm. The catalysed reaction is L-citrulline + L-aspartate + ATP = 2-(N(omega)-L-arginino)succinate + AMP + diphosphate + H(+). Its pathway is amino-acid biosynthesis; L-arginine biosynthesis; L-arginine from L-ornithine and carbamoyl phosphate: step 2/3. This chain is Argininosuccinate synthase, found in Salmonella agona (strain SL483).